A 501-amino-acid polypeptide reads, in one-letter code: Bifunctional purine biosynthesis protein PurH (501 aa).

The MGS-like domain occupies 1–144 (MKKRALISVF…KNFQDVVVIS (144 aa)).

It belongs to the PurH family.

It catalyses the reaction (6R)-10-formyltetrahydrofolate + 5-amino-1-(5-phospho-beta-D-ribosyl)imidazole-4-carboxamide = 5-formamido-1-(5-phospho-D-ribosyl)imidazole-4-carboxamide + (6S)-5,6,7,8-tetrahydrofolate. The enzyme catalyses IMP + H2O = 5-formamido-1-(5-phospho-D-ribosyl)imidazole-4-carboxamide. It participates in purine metabolism; IMP biosynthesis via de novo pathway; 5-formamido-1-(5-phospho-D-ribosyl)imidazole-4-carboxamide from 5-amino-1-(5-phospho-D-ribosyl)imidazole-4-carboxamide (10-formyl THF route): step 1/1. It functions in the pathway purine metabolism; IMP biosynthesis via de novo pathway; IMP from 5-formamido-1-(5-phospho-D-ribosyl)imidazole-4-carboxamide: step 1/1. The sequence is that of Bifunctional purine biosynthesis protein PurH from Clostridium botulinum (strain Eklund 17B / Type B).